The following is a 322-amino-acid chain: MNPLSALFGAGVATRNAMFDRSLLKQQRLRGPVVSVGNLCVGGTGKTPFTQLLGDLLMQREIDFDVLSRGYGRESTEIKIVELDGSPNEFGDEPLLLAKYFAAKKPENPPRVIVGADRYEAGRFAEQKFGPRLHLLDDGFQHRGLARDFDIVLLAPDDADQVLLPVGRLREPLTALKRAHAVVATDEVKIEAFPVMPPLVWRVERDIALPEQLSRNARVLAFCAIARPHRFFTDLRRHGLEPVAELTFRDHHRYSAADIEKIVREISSSRADCCVTTIKDMMNLGELVHRLAPIYAVRLSLKLRDADAALDEIIKIIERRQG.

40–47 contacts ATP; that stretch reads CVGGTGKT.

It belongs to the LpxK family.

It carries out the reaction a lipid A disaccharide + ATP = a lipid IVA + ADP + H(+). The protein operates within glycolipid biosynthesis; lipid IV(A) biosynthesis; lipid IV(A) from (3R)-3-hydroxytetradecanoyl-[acyl-carrier-protein] and UDP-N-acetyl-alpha-D-glucosamine: step 6/6. In terms of biological role, transfers the gamma-phosphate of ATP to the 4'-position of a tetraacyldisaccharide 1-phosphate intermediate (termed DS-1-P) to form tetraacyldisaccharide 1,4'-bis-phosphate (lipid IVA). The polypeptide is Tetraacyldisaccharide 4'-kinase (Koribacter versatilis (strain Ellin345)).